Consider the following 711-residue polypeptide: Zinc finger protein 175 (711 aa).

The segment covering 1 to 11 (MPADVNLSQKP) has biased composition (polar residues). A disordered region spans residues 1–21 (MPADVNLSQKPQVLGPEKQDG). The region spanning 27–98 (VSFEDVTVDF…EAEVSHQRCQ (72 aa)) is the KRAB domain. Residues 279 to 301 (DGCSECGGSFTQKSHLFAQQRIH) form a C2H2-type 1; atypical zinc finger. A C2H2-type 2; atypical zinc finger spans residues 307-329 (HECGKCGKAFMPQLKLSVYLTDH). The segment at 335-357 (CICKECGKVFIQRSELLTHQKTH) adopts a C2H2-type 3 zinc-finger fold. The short motif at 359–362 (RKKP) is the Nuclear localization signal element. C2H2-type zinc fingers lie at residues 363–385 (YKCH…QRTH), 391–413 (YECS…QKIH), 419–441 (YACS…QRIH), 447–469 (YVCI…QRSH), 475–497 (YQCH…HRIH), 503–525 (YECS…QKIH), 531–553 (HVCS…QRIH), 559–581 (YKCS…QRIH), 587–609 (YVCT…QITH), 615–637 (FVCY…QRTH), 643–665 (YECL…QRIH), and 671–693 (YVCS…QTTH).

The protein belongs to the krueppel C2H2-type zinc-finger protein family. In terms of tissue distribution, ubiquitous.

The protein localises to the cytoplasm. It is found in the nucleus. Down-regulates the expression of several chemokine receptors. Interferes with HIV-1 replication by suppressing Tat-induced viral LTR promoter activity. The chain is Zinc finger protein 175 (ZNF175) from Homo sapiens (Human).